The following is a 637-amino-acid chain: tRNA-dihydrouridine(47) synthase [NAD(P)(+)]-like (637 aa).

Disordered regions lie at residues 1-21 (MAETAAESGGGGDSGVGACER), 41-63 (LDGDKQEGACQEVPTGDPAEPGA), and 85-105 (ERQVPKRARGQNKSRPHVKPA). The segment covering 89-104 (PKRARGQNKSRPHVKP) has biased composition (basic residues). 2 consecutive C3H1-type zinc fingers follow at residues 107–137 (YDKDRLCPSFLQEPATPCAFGDRCRFLHDVG) and 145–175 (ADLGPRCVLFETFGRCPFSMTCRFAGAHLGP). Thr260 is subject to Phosphothreonine. 2 positions are modified to phosphoserine: Ser263 and Ser264. Residues 298–300 (PLT) and Gln352 each bind FMN. Cys383 serves as the catalytic Proton donor. Lys403 participates in a covalent cross-link: Glycyl lysine isopeptide (Lys-Gly) (interchain with G-Cter in SUMO2). FMN is bound by residues Lys422, His452, 484 to 486 (NGD), and 507 to 508 (AR).

This sequence belongs to the Dus family. Dus3 subfamily. The cofactor is FMN.

The enzyme catalyses 5,6-dihydrouridine(47) in tRNA + NAD(+) = uridine(47) in tRNA + NADH + H(+). It catalyses the reaction 5,6-dihydrouridine(47) in tRNA + NADP(+) = uridine(47) in tRNA + NADPH + H(+). The catalysed reaction is a 5,6-dihydrouridine in mRNA + NAD(+) = a uridine in mRNA + NADH + H(+). It carries out the reaction a 5,6-dihydrouridine in mRNA + NADP(+) = a uridine in mRNA + NADPH + H(+). Functionally, catalyzes the synthesis of dihydrouridine, a modified base, in various RNAs, such as tRNAs, mRNAs and some long non-coding RNAs (lncRNAs). Mainly modifies the uridine in position 47 (U47) in the D-loop of most cytoplasmic tRNAs. Also able to mediate the formation of dihydrouridine in some mRNAs, thereby regulating their translation. This chain is tRNA-dihydrouridine(47) synthase [NAD(P)(+)]-like, found in Mus musculus (Mouse).